Consider the following 317-residue polypeptide: Nuclear distribution protein nudE homolog (317 aa).

Residues 29 to 180 (TDVKQEYDEF…LKQELNVKSR (152 aa)) adopt a coiled-coil conformation. Positions 186-205 (NGTSVPTANDTNTVNSSMNS) are disordered.

The protein belongs to the nudE family.

The protein localises to the cytoplasm. It localises to the cytoskeleton. The protein resides in the microtubule organizing center. It is found in the centrosome. Its subcellular location is the spindle. Functionally, chaperone protein with functions in nuclear localization. Required for centrosome duplication and formation and function of the mitotic spindle. In postmitotic neurons, acts with nudC downstream of dar1 to ensure correct positioning of the nuclei in primary dendrites and as a consequence, is required for determining multipolar neuron morphology. The sequence is that of Nuclear distribution protein nudE homolog from Drosophila melanogaster (Fruit fly).